The primary structure comprises 460 residues: Pyruvate dehydrogenase E1 component subunit beta (460 aa).

One can recognise a Lipoyl-binding domain in the interval Pro2 to Leu78. An N6-lipoyllysine modification is found at Lys43. Residues Lys91–Ala131 form a disordered region. Residues Pro100–Ala121 show a composition bias toward low complexity. Glu194 contributes to the thiamine diphosphate binding site.

Heterodimer of an alpha and a beta chain. Requires (R)-lipoate as cofactor. Thiamine diphosphate serves as cofactor.

The catalysed reaction is N(6)-[(R)-lipoyl]-L-lysyl-[protein] + pyruvate + H(+) = N(6)-[(R)-S(8)-acetyldihydrolipoyl]-L-lysyl-[protein] + CO2. Its function is as follows. The pyruvate dehydrogenase complex catalyzes the overall conversion of pyruvate to acetyl-CoA and CO(2). It contains multiple copies of three enzymatic components: pyruvate dehydrogenase (E1), dihydrolipoamide acetyltransferase (E2) and lipoamide dehydrogenase (E3). This chain is Pyruvate dehydrogenase E1 component subunit beta (pdhB), found in Rhizobium meliloti (strain 1021) (Ensifer meliloti).